A 209-amino-acid polypeptide reads, in one-letter code: Uracil phosphoribosyltransferase (209 aa).

5-phospho-alpha-D-ribose 1-diphosphate is bound by residues Arg-79, Arg-104, and 131 to 139 (DPMLATANS). Uracil-binding positions include Ile-194 and 199–201 (GDA). Asp-200 contributes to the 5-phospho-alpha-D-ribose 1-diphosphate binding site.

The protein belongs to the UPRTase family. The cofactor is Mg(2+).

It catalyses the reaction UMP + diphosphate = 5-phospho-alpha-D-ribose 1-diphosphate + uracil. It participates in pyrimidine metabolism; UMP biosynthesis via salvage pathway; UMP from uracil: step 1/1. With respect to regulation, allosterically activated by GTP. Catalyzes the conversion of uracil and 5-phospho-alpha-D-ribose 1-diphosphate (PRPP) to UMP and diphosphate. The polypeptide is Uracil phosphoribosyltransferase (Mesorhizobium japonicum (strain LMG 29417 / CECT 9101 / MAFF 303099) (Mesorhizobium loti (strain MAFF 303099))).